Here is a 349-residue protein sequence, read N- to C-terminus: Isopentenyl-diphosphate delta-isomerase (349 aa).

9–10 serves as a coordination point for substrate; the sequence is RK. Residues 65 to 67, Ser-95, and Asn-124 contribute to the FMN site; that span reads AMT. 95–97 serves as a coordination point for substrate; the sequence is STH. Residue Gln-154 coordinates substrate. Mg(2+) is bound at residue Glu-155. Residues Lys-186, Ser-211, Thr-216, 262–264, and 283–284 each bind FMN; these read GLR and SR.

The protein belongs to the IPP isomerase type 2 family. As to quaternary structure, homooctamer. Dimer of tetramers. The cofactor is FMN. NADPH is required as a cofactor. It depends on Mg(2+) as a cofactor.

The protein resides in the cytoplasm. The catalysed reaction is isopentenyl diphosphate = dimethylallyl diphosphate. Its function is as follows. Involved in the biosynthesis of isoprenoids. Catalyzes the 1,3-allylic rearrangement of the homoallylic substrate isopentenyl (IPP) to its allylic isomer, dimethylallyl diphosphate (DMAPP). The polypeptide is Isopentenyl-diphosphate delta-isomerase (Staphylococcus aureus (strain MSSA476)).